We begin with the raw amino-acid sequence, 193 residues long: Segregation and condensation protein B (193 aa).

This sequence belongs to the ScpB family. In terms of assembly, homodimer. Homodimerization may be required to stabilize the binding of ScpA to the Smc head domains. Component of a cohesin-like complex composed of ScpA, ScpB and the Smc homodimer, in which ScpA and ScpB bind to the head domain of Smc. The presence of the three proteins is required for the association of the complex with DNA.

It localises to the cytoplasm. Participates in chromosomal partition during cell division. May act via the formation of a condensin-like complex containing Smc and ScpA that pull DNA away from mid-cell into both cell halves. This is Segregation and condensation protein B from Streptococcus thermophilus (strain ATCC BAA-250 / LMG 18311).